We begin with the raw amino-acid sequence, 218 residues long: PKHD-type hydroxylase Sala_1910 (218 aa).

Positions 74–172 constitute a Fe2OG dioxygenase domain; that stretch reads RIAPPLLTRY…RLVAITFIQS (99 aa). Residues His-92, Asp-94, and His-153 each coordinate Fe cation. Arg-163 provides a ligand contact to 2-oxoglutarate.

Fe(2+) is required as a cofactor. It depends on L-ascorbate as a cofactor.

The sequence is that of PKHD-type hydroxylase Sala_1910 from Sphingopyxis alaskensis (strain DSM 13593 / LMG 18877 / RB2256) (Sphingomonas alaskensis).